Consider the following 402-residue polypeptide: Sulfate adenylyltransferase (402 aa).

Belongs to the sulfate adenylyltransferase family.

The catalysed reaction is sulfate + ATP + H(+) = adenosine 5'-phosphosulfate + diphosphate. Its pathway is sulfur metabolism; hydrogen sulfide biosynthesis; sulfite from sulfate: step 1/3. This chain is Sulfate adenylyltransferase, found in Vesicomyosocius okutanii subsp. Calyptogena okutanii (strain HA).